We begin with the raw amino-acid sequence, 447 residues long: Cytochrome c biogenesis protein CcsB (447 aa).

Helical transmembrane passes span 28 to 48, 87 to 107, and 173 to 193; these read LRLA…GTVI, TWWY…CTFR, and IGPI…IWGA.

This sequence belongs to the Ccs1/CcsB family. May interact with CcsA.

Its subcellular location is the cellular thylakoid membrane. Functionally, required during biogenesis of c-type cytochromes (cytochrome c6 and cytochrome f) at the step of heme attachment. The chain is Cytochrome c biogenesis protein CcsB from Microcystis aeruginosa (strain NIES-843 / IAM M-2473).